Reading from the N-terminus, the 488-residue chain is Beta-1,3-glucan-binding protein (488 aa).

The signal sequence occupies residues Met1–Gly17. The interval Gln18 to Pro135 is binds to curdlan, laminarihexaose and laminarin. The complex formation with laminarin induces self-association of the complexes into a macro structure, likely containing six protein and three laminarin molecules. The macro structures may form a platform on a microbial surface for recruitment of downstream proteases, as a means of amplification of the initial signal of pathogen recognition for the activation of the phenoloxidase cascade. The tract at residues Gln18 to Glu198 is binds to curdlan, lipopolysaccharide and lipoteichoic acid, activates the phenoloxidase cascade and is resistant to proteolytic degradation by trypsin or chymotrypsin, but is not as effective as the full-length protein in aggregation of microorganisms. The region spanning Tyr24 to Asn123 is the CBM39 domain. The segment at Tyr24 to Thr127 is binds to laminarihexaose and laminarin. Residues Asp72, Trp99–Tyr101, and Arg110 contribute to the substrate site. The segment at Asp125–Pro158 is disordered. Residues Ala129–Pro139 are compositionally biased toward polar residues. The segment covering Pro141–Pro150 has biased composition (pro residues). Residues Pro144–Leu488 form the GH16 domain. The tract at residues Val199–Leu488 is binds to laminarin, but not to curdlan, does not activate the phenoloxidase cascade, is susceptible to proteinase digestion by trypsin or chymotrypsin and does not cause aggregation of microorganisms. Residues Asn373 and Asn453 are each glycosylated (N-linked (GlcNAc...) asparagine).

This sequence belongs to the insect beta-1,3-glucan binding protein family. Monomer. Post-translationally, the N-terminus is blocked. In terms of tissue distribution, fat body and hemolymph.

It is found in the secreted. Its function is as follows. Involved in the recognition of invading microorganisms causing their aggregation. Activates the phenoloxidase cascade. Binds specifically to beta-1,3-glucan. Binds to curdlan, a linear water-insoluble beta-1,3-glucan polysaccharide, and to laminarin, a water-soluble beta-1,3-glucan polysaccharide containing beta-1,6 branches. Also binds to lipopolysaccharide and lipoteichoic acid. This chain is Beta-1,3-glucan-binding protein, found in Plodia interpunctella (Indianmeal moth).